A 101-amino-acid polypeptide reads, in one-letter code: Small ribosomal subunit protein bS6 (101 aa).

This sequence belongs to the bacterial ribosomal protein bS6 family.

Binds together with bS18 to 16S ribosomal RNA. The polypeptide is Small ribosomal subunit protein bS6 (Oleidesulfovibrio alaskensis (strain ATCC BAA-1058 / DSM 17464 / G20) (Desulfovibrio alaskensis)).